The following is a 516-amino-acid chain: Arabinose import ATP-binding protein AraG (516 aa).

ABC transporter domains lie at 5 to 240 and 240 to 497; these read LRFD…MVGR and REIS…LPQS. 37–44 serves as a coordination point for ATP; the sequence is GENGAGKS.

It belongs to the ABC transporter superfamily. Arabinose importer (TC 3.A.1.2.2) family. In terms of assembly, the complex is composed of two ATP-binding proteins (AraG), two transmembrane proteins (AraH) and a solute-binding protein (AraF).

Its subcellular location is the cell inner membrane. The catalysed reaction is L-arabinose(out) + ATP + H2O = L-arabinose(in) + ADP + phosphate + H(+). In terms of biological role, part of the ABC transporter complex AraFGH involved in arabinose import. Responsible for energy coupling to the transport system. In Paraburkholderia xenovorans (strain LB400), this protein is Arabinose import ATP-binding protein AraG.